The primary structure comprises 513 residues: Na(+)/H(+) antiporter NhaB (513 aa).

The next 11 membrane-spanning stretches (helical) occupy residues 23–43, 52–72, 97–117, 144–164, 202–222, 238–258, 303–323, 348–368, 391–411, 447–467, and 475–495; these read LALIIFLILNPLIFIISPFVA, IFTLAMALKCYPLLPGGLLAI, LLLMFMVAGIYFMKQLLLFIF, FLDALTVVAVVISVAVGFYGI, LMMHAGVGTALGGVMTMVGEP, FFLRMSPVTVPVLICGLLTCL, AIIGVWLVTALALHLAEVGLI, TESLPFTALLTVFFSVVAVII, LFYIFNGLLSSISDNVFVGTI, ATPNGQAAFLFLLTSALAPLI, and VWMALPYTLVLTLVGLLCVEF.

The protein belongs to the NhaB Na(+)/H(+) (TC 2.A.34) antiporter family.

The protein resides in the cell inner membrane. It carries out the reaction 2 Na(+)(in) + 3 H(+)(out) = 2 Na(+)(out) + 3 H(+)(in). Functionally, na(+)/H(+) antiporter that extrudes sodium in exchange for external protons. The protein is Na(+)/H(+) antiporter NhaB of Escherichia coli (strain SMS-3-5 / SECEC).